The following is a 164-amino-acid chain: Phosphopantetheine adenylyltransferase (164 aa).

Serine 9 is a binding site for substrate. Residues 9–10 (SF) and histidine 17 each bind ATP. Substrate contacts are provided by lysine 41, valine 78, and arginine 92. Residues 93-95 (GLR), glutamate 103, and 128-134 (VRTITAT) each bind ATP.

It belongs to the bacterial CoaD family. As to quaternary structure, homohexamer. Requires Mg(2+) as cofactor.

Its subcellular location is the cytoplasm. It carries out the reaction (R)-4'-phosphopantetheine + ATP + H(+) = 3'-dephospho-CoA + diphosphate. The protein operates within cofactor biosynthesis; coenzyme A biosynthesis; CoA from (R)-pantothenate: step 4/5. Functionally, reversibly transfers an adenylyl group from ATP to 4'-phosphopantetheine, yielding dephospho-CoA (dPCoA) and pyrophosphate. The sequence is that of Phosphopantetheine adenylyltransferase from Brucella suis (strain ATCC 23445 / NCTC 10510).